Reading from the N-terminus, the 394-residue chain is uncharacterized protein (394 aa).

Helical transmembrane passes span 22–42 (VLVS…VLLH), 60–80 (LALF…LLLF), 81–101 (GFTG…APVA), 231–251 (LHLA…YLWL), 271–291 (GFCA…QLAP), 303–323 (LFLV…GDWP), 328–348 (LLGV…APWL), and 355–375 (ALGP…HAWM).

It is found in the cell membrane. This is an uncharacterized protein from Pseudomonas aeruginosa (strain ATCC 15692 / DSM 22644 / CIP 104116 / JCM 14847 / LMG 12228 / 1C / PRS 101 / PAO1).